The chain runs to 160 residues: Cyclic pyranopterin monophosphate synthase (160 aa).

Substrate contacts are provided by residues 74–76 (LSH) and 112–113 (ME). Asp127 is a catalytic residue.

The protein belongs to the MoaC family. Homohexamer; trimer of dimers.

The catalysed reaction is (8S)-3',8-cyclo-7,8-dihydroguanosine 5'-triphosphate = cyclic pyranopterin phosphate + diphosphate. The protein operates within cofactor biosynthesis; molybdopterin biosynthesis. Its function is as follows. Catalyzes the conversion of (8S)-3',8-cyclo-7,8-dihydroguanosine 5'-triphosphate to cyclic pyranopterin monophosphate (cPMP). The protein is Cyclic pyranopterin monophosphate synthase of Geobacter metallireducens (strain ATCC 53774 / DSM 7210 / GS-15).